The following is a 419-amino-acid chain: Serine hydroxymethyltransferase (419 aa).

(6S)-5,6,7,8-tetrahydrofolate contacts are provided by residues Leu121 and 125 to 127; that span reads GHL. An N6-(pyridoxal phosphate)lysine modification is found at Lys230. Position 355–357 (355–357) interacts with (6S)-5,6,7,8-tetrahydrofolate; the sequence is SPF.

This sequence belongs to the SHMT family. Homodimer. Requires pyridoxal 5'-phosphate as cofactor.

The protein resides in the cytoplasm. It catalyses the reaction (6R)-5,10-methylene-5,6,7,8-tetrahydrofolate + glycine + H2O = (6S)-5,6,7,8-tetrahydrofolate + L-serine. It functions in the pathway one-carbon metabolism; tetrahydrofolate interconversion. It participates in amino-acid biosynthesis; glycine biosynthesis; glycine from L-serine: step 1/1. In terms of biological role, catalyzes the reversible interconversion of serine and glycine with tetrahydrofolate (THF) serving as the one-carbon carrier. This reaction serves as the major source of one-carbon groups required for the biosynthesis of purines, thymidylate, methionine, and other important biomolecules. Also exhibits THF-independent aldolase activity toward beta-hydroxyamino acids, producing glycine and aldehydes, via a retro-aldol mechanism. The chain is Serine hydroxymethyltransferase from Streptococcus uberis (strain ATCC BAA-854 / 0140J).